A 278-amino-acid polypeptide reads, in one-letter code: Large ribosomal subunit protein uL2 (278 aa).

The tract at residues 222-278 is disordered; that stretch reads GVVMNPIDHPHGGGEGRTSGGRHPVTPWGKPTKGKKTRSNKSTDKFILISRHKRKKK.

The protein belongs to the universal ribosomal protein uL2 family. In terms of assembly, part of the 50S ribosomal subunit. Forms a bridge to the 30S subunit in the 70S ribosome.

One of the primary rRNA binding proteins. Required for association of the 30S and 50S subunits to form the 70S ribosome, for tRNA binding and peptide bond formation. It has been suggested to have peptidyltransferase activity; this is somewhat controversial. Makes several contacts with the 16S rRNA in the 70S ribosome. The polypeptide is Large ribosomal subunit protein uL2 (Rhodopseudomonas palustris (strain BisB5)).